Reading from the N-terminus, the 94-residue chain is Co-chaperonin GroES (94 aa).

This sequence belongs to the GroES chaperonin family. In terms of assembly, heptamer of 7 subunits arranged in a ring. Interacts with the chaperonin GroEL.

It is found in the cytoplasm. Its function is as follows. Together with the chaperonin GroEL, plays an essential role in assisting protein folding. The GroEL-GroES system forms a nano-cage that allows encapsulation of the non-native substrate proteins and provides a physical environment optimized to promote and accelerate protein folding. GroES binds to the apical surface of the GroEL ring, thereby capping the opening of the GroEL channel. The protein is Co-chaperonin GroES of Alkaliphilus oremlandii (strain OhILAs) (Clostridium oremlandii (strain OhILAs)).